The following is a 224-amino-acid chain: Adenylate kinase (224 aa).

Residue 10–15 (GSGKST) coordinates ATP. Positions 30–59 (SSGDMIRAEIEKGSELGKELKKYLAKGELI) are NMP. Residues S31, R36, 57–59 (ELI), 83–86 (GYPR), and Q90 contribute to the AMP site. An LID region spans residues 124–161 (GRRICPKCGAVYHLRYRPPKVPGKCDLCGSQLIQREDD). R125 is a binding site for ATP. Residues C128 and C131 each contribute to the Zn(2+) site. Residue 134 to 135 (VY) participates in ATP binding. Zn(2+) contacts are provided by C148 and C151. R158 and R169 together coordinate AMP. G197 is an ATP binding site.

It belongs to the adenylate kinase family. Monomer.

It localises to the cytoplasm. It carries out the reaction AMP + ATP = 2 ADP. It functions in the pathway purine metabolism; AMP biosynthesis via salvage pathway; AMP from ADP: step 1/1. In terms of biological role, catalyzes the reversible transfer of the terminal phosphate group between ATP and AMP. Plays an important role in cellular energy homeostasis and in adenine nucleotide metabolism. The protein is Adenylate kinase of Thermococcus onnurineus (strain NA1).